Reading from the N-terminus, the 62-residue chain is Photosystem II reaction center protein Z (62 aa).

Helical transmembrane passes span 8–28 (AVFA…VVFA) and 41–61 (FSGT…NSLI).

The protein belongs to the PsbZ family. As to quaternary structure, PSII is composed of 1 copy each of membrane proteins PsbA, PsbB, PsbC, PsbD, PsbE, PsbF, PsbH, PsbI, PsbJ, PsbK, PsbL, PsbM, PsbT, PsbY, PsbZ, Psb30/Ycf12, at least 3 peripheral proteins of the oxygen-evolving complex and a large number of cofactors. It forms dimeric complexes.

It is found in the plastid. The protein localises to the chloroplast thylakoid membrane. In terms of biological role, may control the interaction of photosystem II (PSII) cores with the light-harvesting antenna, regulates electron flow through the 2 photosystem reaction centers. PSII is a light-driven water plastoquinone oxidoreductase, using light energy to abstract electrons from H(2)O, generating a proton gradient subsequently used for ATP formation. The protein is Photosystem II reaction center protein Z of Cucumis sativus (Cucumber).